The following is a 280-amino-acid chain: 4-diphosphocytidyl-2-C-methyl-D-erythritol kinase (280 aa).

The active site involves Lys-8. 91 to 101 serves as a coordination point for ATP; the sequence is PIEAGLAGGSS. Asp-133 is an active-site residue.

This sequence belongs to the GHMP kinase family. IspE subfamily.

The catalysed reaction is 4-CDP-2-C-methyl-D-erythritol + ATP = 4-CDP-2-C-methyl-D-erythritol 2-phosphate + ADP + H(+). It participates in isoprenoid biosynthesis; isopentenyl diphosphate biosynthesis via DXP pathway; isopentenyl diphosphate from 1-deoxy-D-xylulose 5-phosphate: step 3/6. Functionally, catalyzes the phosphorylation of the position 2 hydroxy group of 4-diphosphocytidyl-2C-methyl-D-erythritol. This chain is 4-diphosphocytidyl-2-C-methyl-D-erythritol kinase, found in Clostridium tetani (strain Massachusetts / E88).